Here is a 156-residue protein sequence, read N- to C-terminus: ATP synthase subunit b (156 aa).

The chain crosses the membrane as a helical span at residues 7–27; sequence LIGQLIAFALFVAFCMKFVWP.

The protein belongs to the ATPase B chain family. F-type ATPases have 2 components, F(1) - the catalytic core - and F(0) - the membrane proton channel. F(1) has five subunits: alpha(3), beta(3), gamma(1), delta(1), epsilon(1). F(0) has three main subunits: a(1), b(2) and c(10-14). The alpha and beta chains form an alternating ring which encloses part of the gamma chain. F(1) is attached to F(0) by a central stalk formed by the gamma and epsilon chains, while a peripheral stalk is formed by the delta and b chains.

The protein resides in the cell inner membrane. In terms of biological role, f(1)F(0) ATP synthase produces ATP from ADP in the presence of a proton or sodium gradient. F-type ATPases consist of two structural domains, F(1) containing the extramembraneous catalytic core and F(0) containing the membrane proton channel, linked together by a central stalk and a peripheral stalk. During catalysis, ATP synthesis in the catalytic domain of F(1) is coupled via a rotary mechanism of the central stalk subunits to proton translocation. Its function is as follows. Component of the F(0) channel, it forms part of the peripheral stalk, linking F(1) to F(0). In Actinobacillus pleuropneumoniae serotype 5b (strain L20), this protein is ATP synthase subunit b.